Here is a 552-residue protein sequence, read N- to C-terminus: Phosphoribosylaminoimidazole carboxylase (552 aa).

Residues 108-295 (KQHLQVFKIA…QFEAHLRAIC (188 aa)) enclose the ATP-grasp domain. 134–189 (GQEFGYPFVLKSKTLAYDGRGNYVVHQPSEIPTAIKALGDRPLYVEKFVPFSMEIA) contributes to the ATP binding site.

This sequence in the C-terminal section; belongs to the AIR carboxylase family. Class I subfamily.

It carries out the reaction 5-amino-1-(5-phospho-D-ribosyl)imidazole-4-carboxylate + H(+) = 5-amino-1-(5-phospho-beta-D-ribosyl)imidazole + CO2. Its pathway is purine metabolism; IMP biosynthesis via de novo pathway; 5-amino-1-(5-phospho-D-ribosyl)imidazole-4-carboxylate from 5-amino-1-(5-phospho-D-ribosyl)imidazole (carboxylase route): step 1/1. The polypeptide is Phosphoribosylaminoimidazole carboxylase (ade6) (Schizosaccharomyces pombe (strain 972 / ATCC 24843) (Fission yeast)).